Here is a 174-residue protein sequence, read N- to C-terminus: Gamma-crystallin E (174 aa).

Beta/gamma crystallin 'Greek key' domains are found at residues 2 to 40 (GKIT…RVDS) and 41 to 83 (GCWM…RLIP). Positions 84–87 (HSSS) are connecting peptide. Beta/gamma crystallin 'Greek key' domains follow at residues 88–128 (HRIK…HVME) and 129–171 (GYWV…RRIM).

The protein belongs to the beta/gamma-crystallin family. In terms of tissue distribution, detected in the superior olivary complex of the auditory hindbrain.

Crystallins are the dominant structural components of the vertebrate eye lens. In Mus musculus (Mouse), this protein is Gamma-crystallin E (Cryge).